The primary structure comprises 1284 residues: 1,6-alpha-glucosyltransferase (1284 aa).

The N-terminal stretch at 1-35 (MRPPNKEIPRILAFFTAFTLFGSTLALLPAPPAHA) is a signal peptide. The active-site Nucleophile is Asp433. Asp436 is a catalytic residue. The active-site Proton donor is Asp495. CBM6 domains lie at 856–988 (SQYE…ITVP) and 994–1120 (GKYE…LLLS).

The protein belongs to the glycosyl hydrolase 31 family.

The protein resides in the secreted. It catalyses the reaction 2 D-maltotetraose = alpha-isomaltosyl-(1-&gt;4)-D-maltotriose + D-maltotriose. The catalysed reaction is Transfers an alpha-D-glucosyl residue in a (1-&gt;4)-alpha-D-glucan to the primary hydroxy group of glucose, free or combined in a (1-&gt;4)-alpha-D-glucan.. With respect to regulation, strongly activated and stabilized by various divalent cations. Strongly inhibited by Cu(2+), Hg(2+) and EDTA, and moderately inhibited by Tris. Its function is as follows. Glycosyltransferase involved, together with CtsY, in the conversion of alpha-1,4-glucan into a cyclic tetrasaccharide (CTS) constructed from four alpha-glucopyranosyl residues. Catalyzes an intermolecular transglucosylation in which a glucose residue at the non-reducing end of maltotetraose is transferred to the 6-OH of an other non-reducing glucose, leading to the formation of alpha-isomaltosyl-(1-&gt;4)-D-maltotriose. Has a wide substrate specificity, and acts on oligosaccharides with alpha-1,4-glucosidic linkages at the non-reducing end, except for maltose. In contrast, has little activity toward oligosaccharides with alpha-1,6-glucosidic linkages at the non-reducing end. The chain is 1,6-alpha-glucosyltransferase from Sporosarcina globispora (Bacillus globisporus).